The sequence spans 207 residues: Nitrile hydratase subunit alpha (207 aa).

4 residues coordinate Fe(3+): Cys-110, Cys-113, Ser-114, and Cys-115. Cys-113 is modified (cysteine sulfinic acid (-SO2H)). Residue Cys-115 is modified to Cysteine sulfenic acid (-SOH).

The protein belongs to the nitrile hydratase subunit alpha family. In terms of assembly, heterodimer of an alpha and a beta chain. Fe(3+) is required as a cofactor. Oxidation on Cys-113 is essential for the activity. Post-translationally, oxidation on Cys-115 stabilizes the Fe-NO ligand coordinated in the inactive form.

It catalyses the reaction an aliphatic primary amide = an aliphatic nitrile + H2O. Inactivated by nitrosylation of the iron center in the dark and activated by photo-induced nitric oxide (NO) release. Inactivated by oxidation of Cys-115 to a sulfenic acid. Its function is as follows. NHase catalyzes the hydration of various nitrile compounds to the corresponding amides. Industrial production of acrylamide is now being developed using some of the enzymes of this class. This is Nitrile hydratase subunit alpha (nthA) from Rhodococcus erythropolis (Arthrobacter picolinophilus).